Reading from the N-terminus, the 1021-residue chain is Ankyrin repeat- and BTB/POZ domain-containing protein 3-A (1021 aa).

The helical transmembrane segment at 160–180 (MVLSWTISVNCITAALSALSL) threads the bilayer. ANK repeat units follow at residues 515-544 (QGMT…DINS), 561-590 (RQGT…NVEG), 599-628 (YTET…DPLI), and 642-671 (GEMN…KDKG). Residues 836–902 (SDVTFLVEGK…LYCGGTESLH (67 aa)) form the BTB domain.

It localises to the membrane. This Danio rerio (Zebrafish) protein is Ankyrin repeat- and BTB/POZ domain-containing protein 3-A (abtb3a).